A 732-amino-acid chain; its full sequence is Catalase-peroxidase (732 aa).

The tract at residues 1–26 is disordered; sequence MADNKKSPETGGITMQIPGKGRTNRD. Residues 96–219 constitute a cross-link (tryptophyl-tyrosyl-methioninium (Trp-Tyr) (with M-245)); that stretch reads WHSAGTYRTF…LAAVQMGLIY (124 aa). Catalysis depends on H97, which acts as the Proton acceptor. Residues 219–245 constitute a cross-link (tryptophyl-tyrosyl-methioninium (Tyr-Met) (with W-96)); that stretch reads YVNPEGPDGNPDPVAAARDIREVFARM. H260 lines the heme b pocket. A disordered region spans residues 344–365; that stretch reads KPKGEAGAGTVPDPHDPKKRHA.

The protein belongs to the peroxidase family. Peroxidase/catalase subfamily. In terms of assembly, homodimer or homotetramer. It depends on heme b as a cofactor. In terms of processing, formation of the three residue Trp-Tyr-Met cross-link is important for the catalase, but not the peroxidase activity of the enzyme.

The enzyme catalyses H2O2 + AH2 = A + 2 H2O. It catalyses the reaction 2 H2O2 = O2 + 2 H2O. In terms of biological role, bifunctional enzyme with both catalase and broad-spectrum peroxidase activity. The polypeptide is Catalase-peroxidase (Methanospirillum hungatei JF-1 (strain ATCC 27890 / DSM 864 / NBRC 100397 / JF-1)).